The chain runs to 243 residues: DNA repair protein RecO (243 aa).

This sequence belongs to the RecO family.

Functionally, involved in DNA repair and RecF pathway recombination. This Chlamydia trachomatis serovar L2 (strain ATCC VR-902B / DSM 19102 / 434/Bu) protein is DNA repair protein RecO.